A 393-amino-acid chain; its full sequence is Probable tRNA sulfurtransferase (393 aa).

The region spanning 61–168 (DEVIESLTRV…GDVINIYSIE (108 aa)) is the THUMP domain. ATP is bound by residues 186-187 (LL), 211-212 (YF), R268, G290, and Q299.

This sequence belongs to the ThiI family.

It is found in the cytoplasm. The enzyme catalyses [ThiI sulfur-carrier protein]-S-sulfanyl-L-cysteine + a uridine in tRNA + 2 reduced [2Fe-2S]-[ferredoxin] + ATP + H(+) = [ThiI sulfur-carrier protein]-L-cysteine + a 4-thiouridine in tRNA + 2 oxidized [2Fe-2S]-[ferredoxin] + AMP + diphosphate. It carries out the reaction [ThiS sulfur-carrier protein]-C-terminal Gly-Gly-AMP + S-sulfanyl-L-cysteinyl-[cysteine desulfurase] + AH2 = [ThiS sulfur-carrier protein]-C-terminal-Gly-aminoethanethioate + L-cysteinyl-[cysteine desulfurase] + A + AMP + 2 H(+). The protein operates within cofactor biosynthesis; thiamine diphosphate biosynthesis. Functionally, catalyzes the ATP-dependent transfer of a sulfur to tRNA to produce 4-thiouridine in position 8 of tRNAs, which functions as a near-UV photosensor. Also catalyzes the transfer of sulfur to the sulfur carrier protein ThiS, forming ThiS-thiocarboxylate. This is a step in the synthesis of thiazole, in the thiamine biosynthesis pathway. The sulfur is donated as persulfide by IscS. This chain is Probable tRNA sulfurtransferase, found in Lachnospira eligens (strain ATCC 27750 / DSM 3376 / VPI C15-48 / C15-B4) (Eubacterium eligens).